The following is a 686-amino-acid chain: DNA ligase (686 aa).

Residues 33–37 (DSVYD), 82–83 (SL), and glutamate 122 each bind NAD(+). Lysine 124 acts as the N6-AMP-lysine intermediate in catalysis. NAD(+)-binding residues include arginine 145, glutamate 182, lysine 300, and lysine 324. Zn(2+) is bound by residues cysteine 418, cysteine 421, cysteine 436, and cysteine 441. A BRCT domain is found at 600 to 686 (AVSQILAGKK…PTVESGDLHP (87 aa)).

It belongs to the NAD-dependent DNA ligase family. LigA subfamily. Requires Mg(2+) as cofactor. Mn(2+) serves as cofactor.

The catalysed reaction is NAD(+) + (deoxyribonucleotide)n-3'-hydroxyl + 5'-phospho-(deoxyribonucleotide)m = (deoxyribonucleotide)n+m + AMP + beta-nicotinamide D-nucleotide.. In terms of biological role, DNA ligase that catalyzes the formation of phosphodiester linkages between 5'-phosphoryl and 3'-hydroxyl groups in double-stranded DNA using NAD as a coenzyme and as the energy source for the reaction. It is essential for DNA replication and repair of damaged DNA. The polypeptide is DNA ligase (Synechococcus sp. (strain JA-2-3B'a(2-13)) (Cyanobacteria bacterium Yellowstone B-Prime)).